The primary structure comprises 414 residues: Tar DNA-binding protein homolog 1 (414 aa).

Composition is skewed to basic and acidic residues over residues 1–44 (MADE…KTTD) and 153–167 (DDGRDGRSGRKRAVE). 2 disordered regions span residues 1–58 (MADE…GDEP) and 132–167 (SSADATSAKRRKVGSSDDSDSDDGRDGRSGRKRAVE). 2 RRM domains span residues 173-259 (VDLI…QGRP) and 262-341 (SRIF…IAQP). Residues 343-414 (EENNQSVGPD…APGDSRGPGW (72 aa)) are disordered. Residues 361-373 (NRRERDRPDRRPI) are compositionally biased toward basic and acidic residues.

Interacts with chromobox protein homolog hpl-2; interaction may maintain localization of hpl-2 to gene bodies. Widely expressed in a range of tissues including body wall muscles, pharynx and neurons of the midbody in adults and larvae.

The protein resides in the nucleus. The protein localises to the cytoplasm. RNA-binding protein which regulates transcription, splicing and RNA-editing. Limits the accumulation of double-stranded RNA by maintaining the abundance of the mature RNA transcripts that are formed from double-stranded precursor RNAs. Stress response protein that acts downstream of daf-16 in the insulin/IGF pathway to regulate longevity and the cellular stress response to osmotic, oxidative, proteotoxic and endoplasmic reticulum stress. Involved in the regulation of physiological processes including aging, fertility, growth and locomotion. Plays a role in maintaining localization of chromobox protein homolog hpl-2 to gene bodies, perhaps acting via binding to nascent RNA transcripts. This Caenorhabditis elegans protein is Tar DNA-binding protein homolog 1.